A 520-amino-acid polypeptide reads, in one-letter code: Cholesterol side-chain cleavage enzyme, mitochondrial (520 aa).

Residues 1–39 (MLARGLALRSVLVKGCQPFLSAPRECPGHPRVGTGEGAC) constitute a mitochondrion transit peptide. A heme-binding site is contributed by C461.

This sequence belongs to the cytochrome P450 family. As to quaternary structure, interacts with FDX1/adrenodoxin. The cofactor is heme.

It localises to the mitochondrion inner membrane. It catalyses the reaction 6 reduced [adrenodoxin] + cholesterol + 3 O2 + 6 H(+) = 4-methylpentanal + pregnenolone + 6 oxidized [adrenodoxin] + 4 H2O. It carries out the reaction 2 reduced [adrenodoxin] + cholesterol + O2 + 2 H(+) = (22R)-hydroxycholesterol + 2 oxidized [adrenodoxin] + H2O. The enzyme catalyses (22R)-hydroxycholesterol + 2 reduced [adrenodoxin] + O2 + 2 H(+) = (20R,22R)-20,22-dihydroxycholesterol + 2 oxidized [adrenodoxin] + H2O. The catalysed reaction is (20R,22R)-20,22-dihydroxycholesterol + 2 reduced [adrenodoxin] + O2 + 2 H(+) = 4-methylpentanal + pregnenolone + 2 oxidized [adrenodoxin] + 2 H2O. It functions in the pathway lipid metabolism; C21-steroid hormone metabolism. It participates in steroid metabolism; cholesterol metabolism. Functionally, a cytochrome P450 monooxygenase that catalyzes the side-chain hydroxylation and cleavage of cholesterol to pregnenolone, the precursor of most steroid hormones. Catalyzes three sequential oxidation reactions of cholesterol, namely the hydroxylation at C22 followed with the hydroxylation at C20 to yield 20R,22R-hydroxycholesterol that is further cleaved between C20 and C22 to yield the C21-steroid pregnenolone and 4-methylpentanal. Mechanistically, uses molecular oxygen inserting one oxygen atom into a substrate and reducing the second into a water molecule. Two electrons are provided by NADPH via a two-protein mitochondrial transfer system comprising flavoprotein FDXR (adrenodoxin/ferredoxin reductase) and nonheme iron-sulfur protein FDX1 or FDX2 (adrenodoxin/ferredoxin). The chain is Cholesterol side-chain cleavage enzyme, mitochondrial (CYP11A1) from Sus scrofa (Pig).